The chain runs to 1040 residues: Multidrug resistance protein MdtB (1040 aa).

Transmembrane regions (helical) follow at residues L25 to A45, L347 to A367, I369 to L389, L396 to I416, I440 to F460, F472 to P492, W537 to I557, L863 to V883, F888 to A908, I910 to I930, I968 to V988, and I998 to I1018.

The protein belongs to the resistance-nodulation-cell division (RND) (TC 2.A.6) family. MdtB subfamily. As to quaternary structure, part of a tripartite efflux system composed of MdtA, MdtB and MdtC. MdtB forms a heteromultimer with MdtC.

The protein resides in the cell inner membrane. The polypeptide is Multidrug resistance protein MdtB (Salmonella dublin (strain CT_02021853)).